Reading from the N-terminus, the 65-residue chain is UPF0434 protein CC_0108 (65 aa).

This sequence belongs to the UPF0434 family.

This Caulobacter vibrioides (strain ATCC 19089 / CIP 103742 / CB 15) (Caulobacter crescentus) protein is UPF0434 protein CC_0108.